Consider the following 470-residue polypeptide: ESX-4 secretion system ATPase EccB4 (470 aa).

The helical transmembrane segment at 44–64 threads the bilayer; sequence LALGCVLAIVAAMGCAFVALL.

It belongs to the EccB family. Part of the ESX-4 / type VII secretion system (T7SS), which is composed of cytosolic and membrane components.

Its subcellular location is the cell membrane. Its function is as follows. An ATPase. The sequence is that of ESX-4 secretion system ATPase EccB4 (eccB4) from Mycobacterium tuberculosis (strain CDC 1551 / Oshkosh).